The chain runs to 396 residues: S-adenosylmethionine synthase (396 aa).

H16 is an ATP binding site. Residue D18 participates in Mg(2+) binding. Residue E44 participates in K(+) binding. 2 residues coordinate L-methionine: E57 and Q100. The interval 100-110 is flexible loop; that stretch reads QSVDIAQGVDR. Residues 165–167, D240, 246–247, A263, and K267 contribute to the ATP site; these read DAK and RK. D240 contributes to the L-methionine binding site. An L-methionine-binding site is contributed by K271.

This sequence belongs to the AdoMet synthase family. In terms of assembly, homotetramer; dimer of dimers. Mg(2+) is required as a cofactor. Requires K(+) as cofactor.

It localises to the cytoplasm. The enzyme catalyses L-methionine + ATP + H2O = S-adenosyl-L-methionine + phosphate + diphosphate. It functions in the pathway amino-acid biosynthesis; S-adenosyl-L-methionine biosynthesis; S-adenosyl-L-methionine from L-methionine: step 1/1. In terms of biological role, catalyzes the formation of S-adenosylmethionine (AdoMet) from methionine and ATP. The overall synthetic reaction is composed of two sequential steps, AdoMet formation and the subsequent tripolyphosphate hydrolysis which occurs prior to release of AdoMet from the enzyme. The polypeptide is S-adenosylmethionine synthase (Pseudomonas entomophila (strain L48)).